The following is a 280-amino-acid chain: MGGIVFNYIDPVAFNLGPLSVRWYGIIIAVGILLGYFVAQRALVKAGLHKDTLVDIIFYSALFGFIAARIYFVIFQWPYYAENPGEIIKIWHGGIAIHGGLIGGFIAGVIVCKVKNLNPFQIGDIVAPSIILAQGIGRWGNFMNHEAHGGPVSRAFLEQLHLPNFIIENMYINGQYYHPTFLYESIWDVAGFIILVNIRKHLKLGETFFLYLTWYSIGRFFIEGLRTDSLMLTSNIRVAQLVSILLILISISLIVYRRIKYNPPLYSKVGALPWPTRKVK.

Helical transmembrane passes span leucine 19–alanine 39, isoleucine 56–glutamine 76, and isoleucine 90–isoleucine 110. Position 138 (arginine 138) interacts with a 1,2-diacyl-sn-glycero-3-phospho-(1'-sn-glycerol). 2 helical membrane-spanning segments follow: residues leucine 204–glycine 224 and isoleucine 236–tyrosine 256.

It belongs to the Lgt family.

Its subcellular location is the cell membrane. It carries out the reaction L-cysteinyl-[prolipoprotein] + a 1,2-diacyl-sn-glycero-3-phospho-(1'-sn-glycerol) = an S-1,2-diacyl-sn-glyceryl-L-cysteinyl-[prolipoprotein] + sn-glycerol 1-phosphate + H(+). It functions in the pathway protein modification; lipoprotein biosynthesis (diacylglyceryl transfer). Functionally, catalyzes the transfer of the diacylglyceryl group from phosphatidylglycerol to the sulfhydryl group of the N-terminal cysteine of a prolipoprotein, the first step in the formation of mature lipoproteins. The chain is Phosphatidylglycerol--prolipoprotein diacylglyceryl transferase from Staphylococcus aureus (strain MRSA252).